The following is a 226-amino-acid chain: HTH-type transcriptional regulator Rv0324 (226 aa).

In terms of domain architecture, HTH arsR-type spans 7-101; it reads RKAALLDQVA…LVQVVADEHL (95 aa). The H-T-H motif DNA-binding region spans 41–64; that stretch reads VEAIATATGMNLTTASANLQALKS. A Rhodanese domain is found at 129-218; it reads EAGEVTLVDV…WRLAGLPVDE (90 aa). Cys177 serves as the catalytic Cysteine persulfide intermediate.

Functionally, part of a regulatory network that coordinates tolerance to the antitubercular drug bedaquiline. This chain is HTH-type transcriptional regulator Rv0324, found in Mycobacterium tuberculosis (strain ATCC 25618 / H37Rv).